Here is a 357-residue protein sequence, read N- to C-terminus: Phosphate acyltransferase (357 aa).

Belongs to the PlsX family. Homodimer. Probably interacts with PlsY.

The protein localises to the cytoplasm. The catalysed reaction is a fatty acyl-[ACP] + phosphate = an acyl phosphate + holo-[ACP]. Its pathway is lipid metabolism; phospholipid metabolism. In terms of biological role, catalyzes the reversible formation of acyl-phosphate (acyl-PO(4)) from acyl-[acyl-carrier-protein] (acyl-ACP). This enzyme utilizes acyl-ACP as fatty acyl donor, but not acyl-CoA. This Herminiimonas arsenicoxydans protein is Phosphate acyltransferase.